The chain runs to 637 residues: MSSDIKIKVQSFGRFLSNMVMPNIGAFIAWGIITALFIPTGWLPNETLAKLVGPMITYLLPLLIGYTGGKLVGGERGGVVGAITTMGVIVGADMPMFLGSMIAGPLGGWCIKHFDRWVDGKIKSGFEMLVNNFSAGIIGMILAILAFLGIGPIVEALSKMLAAGVNFMVVHDMLPLASIFVEPAKILFLNNAINHGIFSPLGIQQSHELGKSIFFLIEANPGPGMGVLLAYMFFGRGSAKQSAGGAAIIHFLGGIHEIYFPYVLMNPRLILAVILGGMTGVFTLTILGGGLVSPASPGSILAVLAMTPKGAYFANIAGVCAAMAVSFVVSAILLKTSKVKEEDDIEAATRRMQDMKAESKGASPLSAGDVTNDLSHVRKIIVACDAGMGSSAMGAGVLRKKIQDAGLSQISVTNSAINNLPPDVDLVITHRDLTERAMRQVPQAQHISLTNFLDSGLYTSLTERLVAAQRHTANEEKVKDSLKDSFDDSSANLFKLGAENIFLGRKAATKEEAIRFAGEQLVKGGYVEPEYVQAMLDREKLTPTYLGESIAVPHGTVEAKDRVLKTGVVFCQYPEGVRFGEEEDDIARLVIGIAARNNEHIQVITSLTNALDDESVIERLAHTTSVDEVLELLAGRK.

Topologically, residues Met-1–Asn-23 are cytoplasmic. The 330-residue stretch at Phe-12 to Glu-341 folds into the PTS EIIC type-2 domain. A helical membrane pass occupies residues Ile-24–Asn-45. The Periplasmic portion of the chain corresponds to Glu-46–Ala-49. A helical transmembrane segment spans residues Lys-50–Lys-70. Over Leu-71–Phe-133 the chain is Cytoplasmic. Residues Ser-134 to Glu-155 form a helical membrane-spanning segment. At Ala-156–Gly-164 the chain is on the periplasmic side. The helical transmembrane segment at Val-165 to Lys-185 threads the bilayer. Residues Ile-186–Ala-272 lie on the Cytoplasmic side of the membrane. A helical membrane pass occupies residues Val-273–Val-292. The Periplasmic portion of the chain corresponds to Ser-293–Tyr-312. A helical membrane pass occupies residues Phe-313–Leu-334. The Cytoplasmic portion of the chain corresponds to Lys-335–Lys-637. One can recognise a PTS EIIB type-2 domain in the interval Arg-378–Ala-473. The active-site Phosphocysteine intermediate; for EIIB activity is the Cys-384. Cys-384 is subject to Phosphocysteine; by EIIA. Residues Phe-494 to Arg-636 form the PTS EIIA type-2 domain. The active-site Tele-phosphohistidine intermediate; for EIIA activity is the His-554. His-554 is modified (phosphohistidine; by HPr).

Homodimer. An intramolecular phosphotransfer takes places between His-554 and Cys-384.

Its subcellular location is the cell inner membrane. It carries out the reaction D-mannitol(out) + N(pros)-phospho-L-histidyl-[protein] = D-mannitol 1-phosphate(in) + L-histidyl-[protein]. Its function is as follows. The phosphoenolpyruvate-dependent sugar phosphotransferase system (sugar PTS), a major carbohydrate active transport system, catalyzes the phosphorylation of incoming sugar substrates concomitantly with their translocation across the cell membrane. This system is involved in D-mannitol transport. Also able to use D-mannonic acid. The protein is PTS system mannitol-specific EIICBA component of Escherichia coli (strain K12).